Reading from the N-terminus, the 335-residue chain is Anthranilate phosphoribosyltransferase (335 aa).

Residues G80, 83–84 (GD), T88, 90–93 (NIST), 108–116 (KHGNRAVSS), and S120 each bind 5-phospho-alpha-D-ribose 1-diphosphate. G80 contributes to the anthranilate binding site. S92 contacts Mg(2+). N111 provides a ligand contact to anthranilate. R166 lines the anthranilate pocket. Mg(2+)-binding residues include D225 and E226.

It belongs to the anthranilate phosphoribosyltransferase family. As to quaternary structure, homodimer. Mg(2+) is required as a cofactor.

It carries out the reaction N-(5-phospho-beta-D-ribosyl)anthranilate + diphosphate = 5-phospho-alpha-D-ribose 1-diphosphate + anthranilate. Its pathway is amino-acid biosynthesis; L-tryptophan biosynthesis; L-tryptophan from chorismate: step 2/5. Functionally, catalyzes the transfer of the phosphoribosyl group of 5-phosphorylribose-1-pyrophosphate (PRPP) to anthranilate to yield N-(5'-phosphoribosyl)-anthranilate (PRA). This Clostridium kluyveri (strain NBRC 12016) protein is Anthranilate phosphoribosyltransferase.